We begin with the raw amino-acid sequence, 179 residues long: Shikimate kinase (179 aa).

15–20 serves as a coordination point for ATP; sequence GAGKTS. Threonine 19 lines the Mg(2+) pocket. Substrate is bound by residues aspartate 37, arginine 61, and glycine 83. Arginine 122 lines the ATP pocket. A substrate-binding site is contributed by arginine 142.

Belongs to the shikimate kinase family. Monomer. Mg(2+) serves as cofactor.

Its subcellular location is the cytoplasm. The enzyme catalyses shikimate + ATP = 3-phosphoshikimate + ADP + H(+). The protein operates within metabolic intermediate biosynthesis; chorismate biosynthesis; chorismate from D-erythrose 4-phosphate and phosphoenolpyruvate: step 5/7. Functionally, catalyzes the specific phosphorylation of the 3-hydroxyl group of shikimic acid using ATP as a cosubstrate. This chain is Shikimate kinase, found in Coxiella burnetii (strain RSA 331 / Henzerling II).